A 346-amino-acid chain; its full sequence is MAEITAKLVKELREKSGAGVMDAKKALVETDGDIEKAIELLREKGMAKAAKKADRVAAEGLTGVYVNGNVAAVIEVNAETDFVAKNAQFVELVNTTAKVIAEGKPANNEESLALIMPSGETLEAAYVSATATIGEKISFRRFALIEKTDAQHFGAYQHNGGRIGVISVVEGGDEALAKQLSMHIAAMKPTVLSYKELDEQFVKDELAQLNHVIDQDNESRAMVNKPALPHLKYGSKAQLTDDVIAQAEADIKAELAAEGKPEKIWDKIIPGKMDRFMLDNTKVDQAYTLLAQVYIMDDSKTVEAYLESVNASVVEFARFEVGEGIEKAANDFEAEVAATMAAALNN.

An involved in Mg(2+) ion dislocation from EF-Tu region spans residues threonine 80–valine 83.

Belongs to the EF-Ts family.

It localises to the cytoplasm. In terms of biological role, associates with the EF-Tu.GDP complex and induces the exchange of GDP to GTP. It remains bound to the aminoacyl-tRNA.EF-Tu.GTP complex up to the GTP hydrolysis stage on the ribosome. The sequence is that of Elongation factor Ts from Streptococcus pneumoniae serotype 19F (strain G54).